The sequence spans 412 residues: Non-specific lipid-transfer protein-like 2 (412 aa).

Positions 410-412 (SKI) match the Microbody targeting signal motif.

It belongs to the thiolase-like superfamily. Thiolase family. In terms of tissue distribution, expressed in intestine, hypodermis and body-wall muscle.

The protein localises to the peroxisome. It carries out the reaction choloyl-CoA + propanoyl-CoA = 3alpha,7alpha,12alpha-trihydroxy-24-oxo-5beta-cholestan-26-oyl-CoA + CoA. With respect to regulation, inhibited by acetyl-CoA. In terms of biological role, catalyzes the thiolytic cleavage of 3-ketoacyl-CoA with 8-16 carbon residues in the acyl group using a ping-pong mechanism whereby binding to 3-ketooctanoyl-CoA results in the release of acetyl-CoA and the subsequent addition of CoA produces 3-ketohexanohyl-CoA. Involved in the biosynthesis of the dauer pheromone by providing short chains of fatty acid that are attached to the ascarylose sugars of the pheromone. This chain is Non-specific lipid-transfer protein-like 2, found in Caenorhabditis elegans.